The chain runs to 397 residues: Phosphoglycerate kinase (397 aa).

Residues 21–23 (DFN), R36, 59–62 (HCGR), R118, and R151 contribute to the substrate site. ATP-binding positions include K201, E323, and 353 to 356 (GGDT).

The protein belongs to the phosphoglycerate kinase family. As to quaternary structure, monomer.

It is found in the cytoplasm. It catalyses the reaction (2R)-3-phosphoglycerate + ATP = (2R)-3-phospho-glyceroyl phosphate + ADP. Its pathway is carbohydrate degradation; glycolysis; pyruvate from D-glyceraldehyde 3-phosphate: step 2/5. This is Phosphoglycerate kinase from Bartonella henselae (strain ATCC 49882 / DSM 28221 / CCUG 30454 / Houston 1) (Rochalimaea henselae).